The sequence spans 107 residues: MVIYCSNSLGAYCKLVINKVAVLLTYFCFVALTNAQFFVSDILVHGKIPPNHLIIQYPSVSRSPRLDTTYPLCESIGVNSRVPLSILFGFLINGTCSPLDMNLETNP.

This is an uncharacterized protein from Homo sapiens (Human).